Here is a 1496-residue protein sequence, read N- to C-terminus: Chromosome partition protein MukB (1496 aa).

63–70 (GGNGAGKS) contacts ATP. Coiled-coil stretches lie at residues 328–493 (KLEL…QRLS) and 536–632 (KMQA…APAW). A flexible hinge region spans residues 694-811 (PDGSDDVRLN…EVPLFGRAAR (118 aa)). 2 coiled-coil regions span residues 861 to 1171 (NPEE…SAEE) and 1235 to 1291 (IDAI…LQNI). Residues 1082–1091 (RARSRRDELQ) show a composition bias toward basic and acidic residues. The tract at residues 1082–1101 (RARSRRDELQQRLSQQRSRK) is disordered.

Belongs to the SMC family. MukB subfamily. In terms of assembly, homodimerization via its hinge domain. Binds to DNA via its C-terminal region. Interacts, and probably forms a ternary complex, with MukE and MukF via its C-terminal region. The complex formation is stimulated by calcium or magnesium. Interacts with tubulin-related protein FtsZ.

Its subcellular location is the cytoplasm. The protein localises to the nucleoid. In terms of biological role, plays a central role in chromosome condensation, segregation and cell cycle progression. Functions as a homodimer, which is essential for chromosome partition. Involved in negative DNA supercoiling in vivo, and by this means organize and compact chromosomes. May achieve or facilitate chromosome segregation by condensation DNA from both sides of a centrally located replisome during cell division. This chain is Chromosome partition protein MukB, found in Actinobacillus pleuropneumoniae serotype 7 (strain AP76).